Consider the following 301-residue polypeptide: Bifunctional protein FolD (301 aa).

NADP(+) is bound by residues 164 to 166 (GRS), Ser191, and Ile232.

Belongs to the tetrahydrofolate dehydrogenase/cyclohydrolase family. As to quaternary structure, homodimer.

The enzyme catalyses (6R)-5,10-methylene-5,6,7,8-tetrahydrofolate + NADP(+) = (6R)-5,10-methenyltetrahydrofolate + NADPH. The catalysed reaction is (6R)-5,10-methenyltetrahydrofolate + H2O = (6R)-10-formyltetrahydrofolate + H(+). It functions in the pathway one-carbon metabolism; tetrahydrofolate interconversion. Its function is as follows. Catalyzes the oxidation of 5,10-methylenetetrahydrofolate to 5,10-methenyltetrahydrofolate and then the hydrolysis of 5,10-methenyltetrahydrofolate to 10-formyltetrahydrofolate. This Borreliella afzelii (strain PKo) (Borrelia afzelii) protein is Bifunctional protein FolD.